We begin with the raw amino-acid sequence, 109 residues long: Phosphoribosyl-AMP cyclohydrolase (109 aa).

Asp76 provides a ligand contact to Mg(2+). Residue Cys77 participates in Zn(2+) binding. Mg(2+) contacts are provided by Asp78 and Asp80. 2 residues coordinate Zn(2+): Cys93 and Cys100.

It belongs to the PRA-CH family. Homodimer. Mg(2+) serves as cofactor. Zn(2+) is required as a cofactor.

The protein localises to the cytoplasm. It carries out the reaction 1-(5-phospho-beta-D-ribosyl)-5'-AMP + H2O = 1-(5-phospho-beta-D-ribosyl)-5-[(5-phospho-beta-D-ribosylamino)methylideneamino]imidazole-4-carboxamide. Its pathway is amino-acid biosynthesis; L-histidine biosynthesis; L-histidine from 5-phospho-alpha-D-ribose 1-diphosphate: step 3/9. Catalyzes the hydrolysis of the adenine ring of phosphoribosyl-AMP. This chain is Phosphoribosyl-AMP cyclohydrolase, found in Streptococcus mutans serotype c (strain ATCC 700610 / UA159).